We begin with the raw amino-acid sequence, 303 residues long: Porphobilinogen deaminase (303 aa).

Residue Cys-241 is modified to S-(dipyrrolylmethanemethyl)cysteine.

This sequence belongs to the HMBS family. As to quaternary structure, monomer. It depends on dipyrromethane as a cofactor.

It catalyses the reaction 4 porphobilinogen + H2O = hydroxymethylbilane + 4 NH4(+). It functions in the pathway porphyrin-containing compound metabolism; protoporphyrin-IX biosynthesis; coproporphyrinogen-III from 5-aminolevulinate: step 2/4. The protein operates within porphyrin-containing compound metabolism; chlorophyll biosynthesis. In terms of biological role, tetrapolymerization of the monopyrrole PBG into the hydroxymethylbilane pre-uroporphyrinogen in several discrete steps. This is Porphobilinogen deaminase from Roseiflexus sp. (strain RS-1).